The primary structure comprises 213 residues: Citrate synthase, mitochondrial (213 aa).

Residue His-74 is part of the active site. 2 positions are modified to N6-acetyllysine; alternate: Lys-94 and Lys-100. N6-succinyllysine; alternate occurs at positions 94 and 100. His-120 is an active-site residue. Arg-129 contacts oxaloacetate. N6-acetyllysine; alternate is present on Lys-148. Lys-148 is subject to N6-succinyllysine; alternate. An N6-acetyllysine modification is found at Lys-155. Lys-166 carries the N6-acetyllysine; alternate modification. Residue Lys-166 is modified to N6-succinyllysine; alternate. Lys-168 is subject to N6,N6,N6-trimethyllysine. Asp-175 is an active-site residue. Arg-201 is an oxaloacetate binding site.

It belongs to the citrate synthase family. In terms of assembly, homodimer. Post-translationally, in response to mitochondrial stress, the precursor protein is ubiquitinated by the SIFI complex in the cytoplasm before mitochondrial import, leading to its degradation. Within the SIFI complex, UBR4 initiates ubiquitin chain that are further elongated or branched by KCMF1.

It is found in the mitochondrion matrix. It carries out the reaction oxaloacetate + acetyl-CoA + H2O = citrate + CoA + H(+). Its pathway is carbohydrate metabolism; tricarboxylic acid cycle; isocitrate from oxaloacetate: step 1/2. In terms of biological role, key enzyme of the Krebs tricarboxylic acid cycle which catalyzes the synthesis of citrate from acetyl coenzyme A and oxaloacetate. The chain is Citrate synthase, mitochondrial from Mesocricetus auratus (Golden hamster).